Consider the following 439-residue polypeptide: Secreted RxLR effector protein 117 (439 aa).

The first 21 residues, 1–21 (MRGAYYVLAALLVVASSQIAA), serve as a signal peptide directing secretion. The short motif at 48 to 65 (RYLRGGHDVHDDSANEER) is the RxLR-dEER element.

This sequence belongs to the RxLR effector family.

Its subcellular location is the secreted. The protein resides in the host nucleus. In terms of biological role, secreted effector that acts as an elicitor that induces cell death in host plant cells. The polypeptide is Secreted RxLR effector protein 117 (Plasmopara viticola (Downy mildew of grapevine)).